Here is a 317-residue protein sequence, read N- to C-terminus: Ret finger protein-like 1 (317 aa).

Residues 40-82 (CPVCSDYLEKPMSLECGCAVCFKCINSLQKEPHGEDLLCCCCS) form an RING-type zinc finger. In terms of domain architecture, B30.2/SPRY spans 107–301 (EPKLKKILQM…DKSVLSICPV (195 aa)).

In terms of processing, phosphorylated by PKC and CDK1. The antiproliferative effect seems to be positively regulated by PKC phosphorylation and negatively by CDK1 phosphorylation. As to expression, seems to be expressed in prostate and less abundantly in adult brain, fetal liver, and fetal kidney.

It localises to the cytoplasm. It is found in the nucleus. Its function is as follows. Negatively regulates the G2-M phase transition, possibly by promoting cyclin B1/CCNB1 and CDK1 proteasomal degradation and thereby preventing their accumulation during interphase. The chain is Ret finger protein-like 1 (RFPL1) from Homo sapiens (Human).